Here is a 294-residue protein sequence, read N- to C-terminus: Elongation factor Ts (294 aa).

Residues 80–83 (TDFV) form an involved in Mg(2+) ion dislocation from EF-Tu region.

Belongs to the EF-Ts family.

It is found in the cytoplasm. In terms of biological role, associates with the EF-Tu.GDP complex and induces the exchange of GDP to GTP. It remains bound to the aminoacyl-tRNA.EF-Tu.GTP complex up to the GTP hydrolysis stage on the ribosome. This Polynucleobacter necessarius subsp. necessarius (strain STIR1) protein is Elongation factor Ts.